The primary structure comprises 150 residues: 3-dehydroquinate dehydratase (150 aa).

Tyrosine 26 acts as the Proton acceptor in catalysis. Asparagine 77, histidine 83, and aspartate 90 together coordinate substrate. Residue histidine 103 is the Proton donor of the active site. Substrate-binding positions include 104–105 and arginine 114; that span reads LS.

Belongs to the type-II 3-dehydroquinase family. In terms of assembly, homododecamer.

The catalysed reaction is 3-dehydroquinate = 3-dehydroshikimate + H2O. It participates in metabolic intermediate biosynthesis; chorismate biosynthesis; chorismate from D-erythrose 4-phosphate and phosphoenolpyruvate: step 3/7. Functionally, catalyzes a trans-dehydration via an enolate intermediate. This is 3-dehydroquinate dehydratase from Pectobacterium carotovorum subsp. carotovorum (strain PC1).